The following is a 314-amino-acid chain: Protein nutcracker (314 aa).

The tract at residues 1–62 (MSDTKSEIEG…PRLIQEKSTQ (62 aa)) is disordered. Low complexity predominate over residues 21–34 (QQQQQPQQQQNEQQ). Residues 257–314 (MQMEMKLQPSLLGLPDELYFEIFRYLDKSQLNVVARVNRHLHFYSKEVERKRLKGGRS) are required for interaction with skpA and Cul1, but not with PI31. The 46-residue stretch at 264–309 (QPSLLGLPDELYFEIFRYLDKSQLNVVARVNRHLHFYSKEVERKRL) folds into the F-box domain.

In terms of assembly, component of an SCF (SKP1-CUL1-F-box protein) E3 ubiquitin-protein ligase complex, at least composed of ntc, skpA and Cul1. Interacts (via F-box domain) with skpA and Cul1. Interacts with Prosalpha7 and PI31. Interacts with Bruce. Expressed in testis (at protein level).

The protein localises to the cytoplasm. In terms of biological role, functions together with PI31 to control non-apoptotic caspase activation during sperm individualization. Positively regulates PI31 stability. The polypeptide is Protein nutcracker (Drosophila melanogaster (Fruit fly)).